A 635-amino-acid chain; its full sequence is DNA mismatch repair protein MutL (635 aa).

It belongs to the DNA mismatch repair MutL/HexB family.

This protein is involved in the repair of mismatches in DNA. It is required for dam-dependent methyl-directed DNA mismatch repair. May act as a 'molecular matchmaker', a protein that promotes the formation of a stable complex between two or more DNA-binding proteins in an ATP-dependent manner without itself being part of a final effector complex. The sequence is that of DNA mismatch repair protein MutL from Yersinia pestis bv. Antiqua (strain Angola).